A 322-amino-acid polypeptide reads, in one-letter code: Undecaprenyl-phosphate 4-deoxy-4-formamido-L-arabinose transferase (322 aa).

Residues methionine 1 to methionine 235 lie on the Cytoplasmic side of the membrane. Residues leucine 236–isoleucine 256 traverse the membrane as a helical segment. The Periplasmic portion of the chain corresponds to leucine 257–glycine 269. A helical transmembrane segment spans residues valine 270–leucine 290. At leucine 291–glutamate 322 the chain is on the cytoplasmic side.

Belongs to the glycosyltransferase 2 family.

It is found in the cell inner membrane. It carries out the reaction UDP-4-deoxy-4-formamido-beta-L-arabinose + di-trans,octa-cis-undecaprenyl phosphate = 4-deoxy-4-formamido-alpha-L-arabinopyranosyl di-trans,octa-cis-undecaprenyl phosphate + UDP. Its pathway is glycolipid biosynthesis; 4-amino-4-deoxy-alpha-L-arabinose undecaprenyl phosphate biosynthesis; 4-amino-4-deoxy-alpha-L-arabinose undecaprenyl phosphate from UDP-4-deoxy-4-formamido-beta-L-arabinose and undecaprenyl phosphate: step 1/2. It participates in bacterial outer membrane biogenesis; lipopolysaccharide biosynthesis. Functionally, catalyzes the transfer of 4-deoxy-4-formamido-L-arabinose from UDP to undecaprenyl phosphate. The modified arabinose is attached to lipid A and is required for resistance to polymyxin and cationic antimicrobial peptides. The chain is Undecaprenyl-phosphate 4-deoxy-4-formamido-L-arabinose transferase from Escherichia coli (strain SMS-3-5 / SECEC).